A 1153-amino-acid chain; its full sequence is Cingulin (1153 aa).

Residues M1 to V342 are head. A disordered region spans residues I17–R37. Residues A38–G52 carry the ZIM motif. An interaction with TJP1/ZO1 region spans residues A44–V57. 8 positions are modified to phosphoserine: S86, S126, S128, S131, S146, S205, S208, and S324. Disordered stretches follow at residues S131–G151 and D177–R253. Residues D207–S220 show a composition bias toward basic and acidic residues. The stretch at L343–A1110 forms a coiled coil. Residue K562 is modified to N6-acetyllysine. Disordered regions lie at residues A755–L796, Q823–L861, and A1110–D1131. Basic and acidic residues-rich tracts occupy residues A772–L796 and E827–K853. A tail region spans residues A1111–C1153. The segment covering A1115–L1124 has biased composition (polar residues). Residues S1125 and S1126 each carry the phosphoserine modification.

This sequence belongs to the cingulin family. As to quaternary structure, homodimer. Interacts with TJP1/ZO1 and SPEF1.

The protein resides in the cell junction. The protein localises to the tight junction. Probably plays a role in the formation and regulation of the tight junction (TJ) paracellular permeability barrier. The protein is Cingulin of Sorex araneus (Eurasian common shrew).